We begin with the raw amino-acid sequence, 461 residues long: Transcription factor GTE3, chloroplastic (461 aa).

Residues 1–11 (MASGPIAGGGV) are compositionally biased toward gly residues. The segment at 1-41 (MASGPIAGGGVSKTKHKWSDSGNKSQKRSKPTVANSNSLGL) is disordered. A chloroplast-targeting transit peptide spans 1–51 (MASGPIAGGGVSKTKHKWSDSGNKSQKRSKPTVANSNSLGLEDNHQMMKIS). The region spanning 114 to 220 (KGTVQILKSC…NLFEEKWVPL (107 aa)) is the Bromo domain. Positions 298–379 (LVEEASANRD…EYKESLSKKK (82 aa)) constitute an NET domain. The span at 376 to 392 (SKKKEEQGLDSERDAES) shows a compositional bias: basic and acidic residues. The disordered stretch occupies residues 376–461 (SKKKEEQGLD…SSGHESDTGN (86 aa)). Residues 393–412 (FHNSVHESNTLVTGLESSKV) show a composition bias toward polar residues. The span at 429-451 (GGSSSSNSSSSGSGSGSSGSDSD) shows a compositional bias: low complexity. The span at 452–461 (SSGHESDTGN) shows a compositional bias: basic and acidic residues.

As to quaternary structure, interacts with SIZ1 (via PHD domain). In terms of processing, sumoylated by SIZ1. Sumoylation reduces capacity to bind to acetylated histone H3.

The protein localises to the plastid. The protein resides in the chloroplast. Its function is as follows. Probable transcription factor that binds to acetylated histone H3. The sequence is that of Transcription factor GTE3, chloroplastic (GTE3) from Arabidopsis thaliana (Mouse-ear cress).